The chain runs to 271 residues: Urease accessory protein UreD (271 aa).

It belongs to the UreD family. As to quaternary structure, ureD, UreF and UreG form a complex that acts as a GTP-hydrolysis-dependent molecular chaperone, activating the urease apoprotein by helping to assemble the nickel containing metallocenter of UreC. The UreE protein probably delivers the nickel.

It is found in the cytoplasm. Its function is as follows. Required for maturation of urease via the functional incorporation of the urease nickel metallocenter. The chain is Urease accessory protein UreD from Haemophilus influenzae (strain PittEE).